The primary structure comprises 688 residues: Glycine--tRNA ligase beta subunit (688 aa).

It belongs to the class-II aminoacyl-tRNA synthetase family. Tetramer of two alpha and two beta subunits.

The protein resides in the cytoplasm. The enzyme catalyses tRNA(Gly) + glycine + ATP = glycyl-tRNA(Gly) + AMP + diphosphate. The protein is Glycine--tRNA ligase beta subunit of Aliivibrio salmonicida (strain LFI1238) (Vibrio salmonicida (strain LFI1238)).